The chain runs to 161 residues: MKVILLDSIDKVGKIGSEIIVKSGYARNFLFPKSKAVLSTKKNLAIFKKQQHILKSNLDSKRLKAEFRAKAINDLGSITITVKSSIHGKLFGSIGSRDIAKLITESVGFEVHKSQIRLPNRDALKSIGEHNVCIHVYNEIYANLTVHILNSVLFQDKSKKS.

This sequence belongs to the bacterial ribosomal protein bL9 family.

Functionally, binds to the 23S rRNA. This is Large ribosomal subunit protein bL9 from Blochmanniella floridana.